A 370-amino-acid chain; its full sequence is Ubiquinone biosynthesis O-methyltransferase, mitochondrial (370 aa).

The N-terminal 86 residues, 1-86 (MWGGSKLSSS…SYRLPWTRPY (86 aa)), are a transit peptide targeting the mitochondrion. Arginine 125 lines the S-adenosyl-L-methionine pocket. Residues lysine 144 and lysine 150 each carry the N6-acetyllysine modification. S-adenosyl-L-methionine contacts are provided by glycine 155 and aspartate 176. An N6-acetyllysine modification is found at lysine 197. Serine 223 is a binding site for S-adenosyl-L-methionine. Residues glutamate 224, glutamate 227, and histidine 228 each contribute to the Mg(2+) site.

The protein belongs to the class I-like SAM-binding methyltransferase superfamily. UbiG/COQ3 family. As to quaternary structure, component of a multi-subunit COQ enzyme complex, composed of at least COQ3, COQ4, COQ5, COQ6, COQ7 and COQ9. Mg(2+) is required as a cofactor.

It localises to the mitochondrion inner membrane. The catalysed reaction is 3,4-dihydroxy-5-(all-trans-decaprenyl)benzoate + S-adenosyl-L-methionine = 4-hydroxy-3-methoxy-5-(all-trans-decaprenyl)benzoate + S-adenosyl-L-homocysteine + H(+). The enzyme catalyses a 3-demethylubiquinone + S-adenosyl-L-methionine = a ubiquinone + S-adenosyl-L-homocysteine. It catalyses the reaction 3-demethylubiquinol-10 + S-adenosyl-L-methionine = ubiquinol-10 + S-adenosyl-L-homocysteine + H(+). The protein operates within cofactor biosynthesis; ubiquinone biosynthesis. Its function is as follows. O-methyltransferase required for two non-consecutive steps during ubiquinone biosynthesis. Catalyzes the 2 O-methylation of 3,4-dihydroxy-5-(all-trans-decaprenyl)benzoic acid into 4-hydroxy-3-methoxy-5-(all-trans-decaprenyl)benzoic acid. Also catalyzes the last step of ubiquinone biosynthesis by mediating methylation of 3-demethylubiquinone into ubiquinone. Also able to mediate the methylation of 3-demethylubiquinol-10 into ubiquinol-10. This is Ubiquinone biosynthesis O-methyltransferase, mitochondrial from Bos taurus (Bovine).